The sequence spans 143 residues: MSLSAKDMAVVKGFWNKIAPKADEIGGEALGRMLRVFPQTKAYFAHWKDTSPNSPEVKKHGALILATIGDVVNRIENMTTVLGSLSDLHAFKLRVDPANFKILGHNIMVVICMTFPNDFTPEVHLSVDKFFQNFTLALSERYR.

Ser2 bears the N-acetylserine mark. The Globin domain occupies 2-143 (SLSAKDMAVV…FTLALSERYR (142 aa)). O2 is bound at residue His60. His89 lines the heme b pocket.

This sequence belongs to the globin family. As to quaternary structure, heterotetramer of two alpha chains and two beta chains. Red blood cells.

Functionally, involved in oxygen transport from gills to the various peripheral tissues. The protein is Hemoglobin anodic subunit alpha (hba) of Anguilla anguilla (European freshwater eel).